The chain runs to 218 residues: Ribosomal RNA small subunit methyltransferase J (218 aa).

S-adenosyl-L-methionine-binding positions include 55 to 56 (RD), 71 to 72 (ER), and Asp123.

The protein belongs to the methyltransferase superfamily. RsmJ family.

The protein localises to the cytoplasm. The catalysed reaction is guanosine(1516) in 16S rRNA + S-adenosyl-L-methionine = N(2)-methylguanosine(1516) in 16S rRNA + S-adenosyl-L-homocysteine + H(+). In terms of biological role, specifically methylates the guanosine in position 1516 of 16S rRNA. The protein is Ribosomal RNA small subunit methyltransferase J of Rhodopseudomonas palustris (strain HaA2).